A 365-amino-acid chain; its full sequence is Histidinol-phosphate aminotransferase (365 aa).

Lys227 is subject to N6-(pyridoxal phosphate)lysine.

Belongs to the class-II pyridoxal-phosphate-dependent aminotransferase family. Histidinol-phosphate aminotransferase subfamily. In terms of assembly, homodimer. Requires pyridoxal 5'-phosphate as cofactor.

The catalysed reaction is L-histidinol phosphate + 2-oxoglutarate = 3-(imidazol-4-yl)-2-oxopropyl phosphate + L-glutamate. The protein operates within amino-acid biosynthesis; L-histidine biosynthesis; L-histidine from 5-phospho-alpha-D-ribose 1-diphosphate: step 7/9. The protein is Histidinol-phosphate aminotransferase of Campylobacter concisus (strain 13826).